Reading from the N-terminus, the 446-residue chain is Nuclear envelope integral membrane protein 1 (446 aa).

An N-terminal signal peptide occupies residues 1-37 (MAGFMKYKSVSTTIETVRLKLILTAVLFLFPFSQTSG). N-linked (GlcNAc...) asparagine glycosylation is found at N62, N118, and N129. A run of 5 helical transmembrane segments spans residues 154 to 174 (IYLF…DVLS), 181 to 201 (YSAG…FIVY), 209 to 229 (PFYM…QLVF), 239 to 259 (HWHL…AVCY), and 269 to 289 (SINI…YAGI). Acidic residues predominate over residues 410-431 (LFSTDEEDKEEEEDGWETEDDI). Positions 410–446 (LFSTDEEDKEEEEDGWETEDDIKPEVTSPRMNNTRGK) are disordered. A glycan (N-linked (GlcNAc...) asparagine) is linked at N441.

It belongs to the NEMP family.

The protein resides in the nucleus inner membrane. Functionally, contributes to nuclear envelope stiffness in germ cells. Involved in male and female fertility. Essential for normal erythropoiesis. Required for efficient nuclear envelope opening and enucleation during the late stages of erythroblast maturation. The protein is Nuclear envelope integral membrane protein 1 of Danio rerio (Zebrafish).